The sequence spans 309 residues: Ankyrin repeat protein VACWR203 (309 aa).

ANK repeat units follow at residues S13–I44, K110–A142, F160–I189, P197–H231, and E269–V298.

This sequence belongs to the orthopoxviruses VACWR203 protein family.

This is Ankyrin repeat protein VACWR203 from Bos taurus (Bovine).